The following is a 289-amino-acid chain: Aquaporin PIP1-2 (289 aa).

Residues Met-1–Glu-36 are disordered. A run of 2 helical transmembrane segments spans residues Ile-58–Val-78 and Ile-93–His-115. An NPA 1 motif is present at residues Asn-117–Ala-119. The next 3 helical transmembrane spans lie at Leu-136–Phe-156, Gly-178–Ala-198, and Ile-212–Ile-232. Positions Asn-238–Ala-240 match the NPA 2 motif. The helical transmembrane segment at Ile-260–Ile-280 threads the bilayer.

This sequence belongs to the MIP/aquaporin (TC 1.A.8) family. PIP (TC 1.A.8.11) subfamily. In terms of assembly, interacts with PIP2-1 to form heteromers. Highly expressed in developing tassels and at lower levels in roots, shoots, ears and embryos. Expressed in the root growing zone at 5-6 mm from the root tip. Expressed in xylem parenchyma.

Its subcellular location is the cell membrane. Water channel required to facilitate the transport of water across cell membrane. Active as heteromers with PIP1-1, PIP2-1, PIP2-4 or PIP2-5, but not as homomers. The polypeptide is Aquaporin PIP1-2 (PIP1-2) (Zea mays (Maize)).